A 719-amino-acid polypeptide reads, in one-letter code: Phosphoribosylformylglycinamidine synthase subunit PurL (719 aa).

Residue H47 is part of the active site. Positions 50 and 89 each coordinate ATP. A Mg(2+)-binding site is contributed by E91. Residues 92–95 and R114 each bind substrate; that span reads SHNH. H93 (proton acceptor) is an active-site residue. D115 contacts Mg(2+). Q238 lines the substrate pocket. Position 266 (D266) interacts with Mg(2+). Position 310 to 312 (310 to 312) interacts with substrate; the sequence is ESQ. The ATP site is built by D488 and G525. Position 526 (N526) interacts with Mg(2+). Position 528 (S528) interacts with substrate.

Belongs to the FGAMS family. Monomer. Part of the FGAM synthase complex composed of 1 PurL, 1 PurQ and 2 PurS subunits.

The protein localises to the cytoplasm. It carries out the reaction N(2)-formyl-N(1)-(5-phospho-beta-D-ribosyl)glycinamide + L-glutamine + ATP + H2O = 2-formamido-N(1)-(5-O-phospho-beta-D-ribosyl)acetamidine + L-glutamate + ADP + phosphate + H(+). The protein operates within purine metabolism; IMP biosynthesis via de novo pathway; 5-amino-1-(5-phospho-D-ribosyl)imidazole from N(2)-formyl-N(1)-(5-phospho-D-ribosyl)glycinamide: step 1/2. Functionally, part of the phosphoribosylformylglycinamidine synthase complex involved in the purines biosynthetic pathway. Catalyzes the ATP-dependent conversion of formylglycinamide ribonucleotide (FGAR) and glutamine to yield formylglycinamidine ribonucleotide (FGAM) and glutamate. The FGAM synthase complex is composed of three subunits. PurQ produces an ammonia molecule by converting glutamine to glutamate. PurL transfers the ammonia molecule to FGAR to form FGAM in an ATP-dependent manner. PurS interacts with PurQ and PurL and is thought to assist in the transfer of the ammonia molecule from PurQ to PurL. The polypeptide is Phosphoribosylformylglycinamidine synthase subunit PurL (Cereibacter sphaeroides (strain ATCC 17025 / ATH 2.4.3) (Rhodobacter sphaeroides)).